Reading from the N-terminus, the 1045-residue chain is Translation initiation factor IF-2 (1045 aa).

Disordered stretches follow at residues 1–169 and 184–451; these read MSDE…AQAP and QAPA…RGGP. The segment covering 83-94 has biased composition (gly residues); sequence SGGGGSSAGGLS. Basic and acidic residues predominate over residues 103 to 123; that stretch reads RAIEAAREHQERQAAERRAAE. Low complexity predominate over residues 124–151; it reads ARAASEAAAARDAAAKSAAAAKAAAAPA. Residues 152 to 163 are compositionally biased toward pro residues; it reads PEAPAAPAPTPA. Low complexity predominate over residues 184–199; that stretch reads QAPAAPVAAAPAAPRA. 2 stretches are compositionally biased toward basic and acidic residues: residues 227 to 237 and 302 to 323; these read EPSRDRRDDRS and RNDR…RPQG. Residues 338-348 show a composition bias toward pro residues; that stretch reads RPAPGARPGPG. The segment covering 352 to 363 has biased composition (low complexity); the sequence is GARPGVPASAPA. 2 stretches are compositionally biased toward basic and acidic residues: residues 381-393 and 438-450; these read VGRK…DRRK and RARE…RRGG. The region spanning 540–710 is the tr-type G domain; it reads PRPPVVTVMG…LLLAEVMDLK (171 aa). The tract at residues 549–556 is G1; it reads GHVDHGKT. 549–556 provides a ligand contact to GTP; that stretch reads GHVDHGKT. The segment at 574 to 578 is G2; that stretch reads GITQH. The segment at 596–599 is G3; that stretch reads DTPG. Residues 596 to 600 and 650 to 653 each bind GTP; these read DTPGH and NKMD. The G4 stretch occupies residues 650–653; it reads NKMD. The interval 686-688 is G5; that stretch reads SAK.

Belongs to the TRAFAC class translation factor GTPase superfamily. Classic translation factor GTPase family. IF-2 subfamily.

It is found in the cytoplasm. In terms of biological role, one of the essential components for the initiation of protein synthesis. Protects formylmethionyl-tRNA from spontaneous hydrolysis and promotes its binding to the 30S ribosomal subunits. Also involved in the hydrolysis of GTP during the formation of the 70S ribosomal complex. The sequence is that of Translation initiation factor IF-2 from Caulobacter sp. (strain K31).